The sequence spans 123 residues: uncharacterized protein (123 aa).

This is an uncharacterized protein from Aquifex aeolicus (strain VF5).